A 581-amino-acid chain; its full sequence is Arginine--tRNA ligase (581 aa).

The 'HIGH' region motif lies at 122–132 (PNVAKPMHVGH).

The protein belongs to the class-I aminoacyl-tRNA synthetase family. In terms of assembly, monomer.

The protein resides in the cytoplasm. It catalyses the reaction tRNA(Arg) + L-arginine + ATP = L-arginyl-tRNA(Arg) + AMP + diphosphate. The chain is Arginine--tRNA ligase from Francisella tularensis subsp. novicida (strain U112).